Here is a 303-residue protein sequence, read N- to C-terminus: Phosphatidylglycerol--prolipoprotein diacylglyceryl transferase (303 aa).

Transmembrane regions (helical) follow at residues 18–38, 58–78, and 107–127; these read VGFFTLRWYGLLIAFAVLIGL, LLPILVISSIIGARAYYVIFE, and WQGGIAIHGALLAGTIAILIF. Residue Arg-154 coordinates a 1,2-diacyl-sn-glycero-3-phospho-(1'-sn-glycerol). Transmembrane regions (helical) follow at residues 193-213 and 266-286; these read PTFLYESIWNILLFLCLISLI and IAQLISTILFGLGLLGLFWIY.

The protein belongs to the Lgt family.

The protein localises to the cell inner membrane. The enzyme catalyses L-cysteinyl-[prolipoprotein] + a 1,2-diacyl-sn-glycero-3-phospho-(1'-sn-glycerol) = an S-1,2-diacyl-sn-glyceryl-L-cysteinyl-[prolipoprotein] + sn-glycerol 1-phosphate + H(+). It functions in the pathway protein modification; lipoprotein biosynthesis (diacylglyceryl transfer). Functionally, catalyzes the transfer of the diacylglyceryl group from phosphatidylglycerol to the sulfhydryl group of the N-terminal cysteine of a prolipoprotein, the first step in the formation of mature lipoproteins. In Prochlorococcus marinus (strain MIT 9211), this protein is Phosphatidylglycerol--prolipoprotein diacylglyceryl transferase.